The sequence spans 223 residues: Cuticular glutathione peroxidase (223 aa).

Positions 1-19 (MSAQLLILSHVVLLQLIVA) are cleaved as a signal peptide. A glycan (N-linked (GlcNAc...) asparagine) is linked at Asn-39. The active site involves Cys-74. The N-linked (GlcNAc...) asparagine glycan is linked to Asn-92.

The protein belongs to the glutathione peroxidase family. In terms of assembly, homotetramer.

It localises to the secreted. The enzyme catalyses 2 glutathione + H2O2 = glutathione disulfide + 2 H2O. In terms of biological role, could inhibit the oxidative burst of leukocytes and neutralize the secondary products of lipid peroxidation, thus providing the resistance of these parasites to immune effector mechanisms and their persistence in the mammalian host. It may also be involved in the formation of cross-linking residues such as dityrosine, trityrosine and isotrityrosine identified in cuticular collagen. Highly cross-linked external cortex may also serve to protect the parasite from immune attack. This is Cuticular glutathione peroxidase from Wuchereria bancrofti.